Consider the following 974-residue polypeptide: Valine--tRNA ligase, chloroplastic/mitochondrial 2 (974 aa).

Residues 109–119 carry the 'HIGH' region motif; the sequence is PNVTGSLHMGH. An LRR 1 repeat occupies 432–454; the sequence is LAEKALLAVENKELTIIPERFEK. The stretch at 489–518 forms a coiled coil; that stretch reads EEDYIVAKSAEEALEKALEKYGKDVEIYQD. The 'KMSKS' region signature appears at 598-602; it reads KMSKS. An ATP-binding site is contributed by K601. The LRR 2 repeat unit spans residues 857–880; sequence LALLSRLDLNNVHFSNAPPGDANL.

This sequence belongs to the class-I aminoacyl-tRNA synthetase family.

It is found in the plastid. Its subcellular location is the chloroplast. The protein localises to the mitochondrion. It carries out the reaction tRNA(Val) + L-valine + ATP = L-valyl-tRNA(Val) + AMP + diphosphate. The polypeptide is Valine--tRNA ligase, chloroplastic/mitochondrial 2 (Arabidopsis thaliana (Mouse-ear cress)).